The primary structure comprises 444 residues: 23S rRNA (uracil(1939)-C(5))-methyltransferase RlmD (444 aa).

The 60-residue stretch at 11–70 (NSIKNHILKNIKVEKLDHRGRGLAYFQNKPLFIDGALAGELLEVQIVESKKRYSKGKIKK) folds into the TRAM domain. [4Fe-4S] cluster is bound by residues C83, C89, C92, and C171. Residues Q277, F306, N311, E327, D354, and D376 each coordinate S-adenosyl-L-methionine. The active-site Nucleophile is C402.

It belongs to the class I-like SAM-binding methyltransferase superfamily. RNA M5U methyltransferase family. RlmD subfamily.

It carries out the reaction uridine(1939) in 23S rRNA + S-adenosyl-L-methionine = 5-methyluridine(1939) in 23S rRNA + S-adenosyl-L-homocysteine + H(+). Catalyzes the formation of 5-methyl-uridine at position 1939 (m5U1939) in 23S rRNA. The chain is 23S rRNA (uracil(1939)-C(5))-methyltransferase RlmD from Psychromonas ingrahamii (strain DSM 17664 / CCUG 51855 / 37).